We begin with the raw amino-acid sequence, 459 residues long: Cysteine--tRNA ligase (459 aa).

C28 contributes to the Zn(2+) binding site. The 'HIGH' region signature appears at 30–40; the sequence is VTIYDLCHIGH. 3 residues coordinate Zn(2+): C209, H234, and E238. Residues 266–270 carry the 'KMSKS' region motif; the sequence is KMSKS. K269 contributes to the ATP binding site.

This sequence belongs to the class-I aminoacyl-tRNA synthetase family. As to quaternary structure, monomer. Zn(2+) serves as cofactor.

Its subcellular location is the cytoplasm. It catalyses the reaction tRNA(Cys) + L-cysteine + ATP = L-cysteinyl-tRNA(Cys) + AMP + diphosphate. The chain is Cysteine--tRNA ligase from Shewanella amazonensis (strain ATCC BAA-1098 / SB2B).